The sequence spans 176 residues: Ferredoxin-type protein NapF (176 aa).

2 consecutive 4Fe-4S ferredoxin-type domains span residues 39–68 and 71–100; these read VENS…KGDA and PEVR…PRDQ. [4Fe-4S] cluster is bound by residues Cys48, Cys51, Cys54, Cys58, Cys80, Cys83, Cys86, Cys90, Cys113, Cys121, Cys124, Cys128, Cys152, Cys155, Cys158, and Cys162. 4Fe-4S ferredoxin-type domains are found at residues 119–138 and 143–172; these read IECR…FKLQ and AQPL…MNDL.

The protein belongs to the NapF family. As to quaternary structure, interacts with the cytoplasmic NapA precursor. The cofactor is [4Fe-4S] cluster.

It localises to the cytoplasm. In terms of biological role, could be involved in the maturation of NapA, the catalytic subunit of the periplasmic nitrate reductase, before its export into the periplasm. This chain is Ferredoxin-type protein NapF, found in Haemophilus influenzae (strain ATCC 51907 / DSM 11121 / KW20 / Rd).